We begin with the raw amino-acid sequence, 122 residues long: MVPAPGSRAFPSPVFLGGVFFVFFFRWRGNYKVQQVRLRQYWEFTLWETAPNTKQKNDFFAKTLTYIKLALWPQLKKQSNQRNQRRGPPGERRILTPLRGACQLICSLLMKTETLSVPRILT.

The helical transmembrane segment at 9–25 threads the bilayer; the sequence is AFPSPVFLGGVFFVFFF.

It is found in the cytoplasm. It localises to the nucleus. Its subcellular location is the membrane. This is an uncharacterized protein from Saccharomyces cerevisiae (strain ATCC 204508 / S288c) (Baker's yeast).